We begin with the raw amino-acid sequence, 184 residues long: Cytochrome c homolog (184 aa).

The Cytoplasmic portion of the chain corresponds to 1–10 (MDSFELNKIL). Residues 11–31 (GAVLGTCLILLVTSFTANALF) traverse the membrane as a helical; Signal-anchor segment. Residues 32-184 (SPKMPEKPGF…HPKPLPTASK (153 aa)) lie on the Periplasmic side of the membrane. Heme c contacts are provided by Cys-84, Cys-87, His-88, and Met-151.

Belongs to the cytochrome c family. In terms of processing, binds 1 heme c group covalently per subunit.

It localises to the cell membrane. Functionally, may be involved in electron transfer from bc1 complex to aa3. The chain is Cytochrome c homolog (cycM) from Bradyrhizobium diazoefficiens (strain JCM 10833 / BCRC 13528 / IAM 13628 / NBRC 14792 / USDA 110).